A 259-amino-acid chain; its full sequence is Polycomb group RING finger protein 1 (259 aa).

Residues 45 to 84 (CYLCAGYFIDATTITECLHTFCKSCIVKYLQTSKYCPLCN) form an RING-type zinc finger.

As to quaternary structure, component of a PRC1-like complex.

It localises to the nucleus. In terms of biological role, component of a Polycomb group (PcG) multiprotein PRC1-like complex, a complex class required to maintain the transcriptionally repressive state of many genes, including Hox genes, throughout development. PcG PRC1 complex acts via chromatin remodeling and modification of histones; it mediates monoubiquitination of histone H2A 'Lys-119', rendering chromatin heritably changed in its expressibility. In Xenopus laevis (African clawed frog), this protein is Polycomb group RING finger protein 1 (pcgf1).